A 182-amino-acid polypeptide reads, in one-letter code: NADH-quinone oxidoreductase subunit I (182 aa).

4Fe-4S ferredoxin-type domains follow at residues 52–82 (LTRD…LQKA) and 92–121 (EFFR…LTPD). 8 residues coordinate [4Fe-4S] cluster: C62, C65, C68, C72, C101, C104, C107, and C111.

The protein belongs to the complex I 23 kDa subunit family. NDH-1 is composed of 13 different subunits. Subunits NuoA, H, J, K, L, M, N constitute the membrane sector of the complex. [4Fe-4S] cluster is required as a cofactor.

It localises to the cell inner membrane. It catalyses the reaction a quinone + NADH + 5 H(+)(in) = a quinol + NAD(+) + 4 H(+)(out). In terms of biological role, NDH-1 shuttles electrons from NADH, via FMN and iron-sulfur (Fe-S) centers, to quinones in the respiratory chain. The immediate electron acceptor for the enzyme in this species is believed to be ubiquinone. Couples the redox reaction to proton translocation (for every two electrons transferred, four hydrogen ions are translocated across the cytoplasmic membrane), and thus conserves the redox energy in a proton gradient. The protein is NADH-quinone oxidoreductase subunit I of Pseudomonas aeruginosa (strain LESB58).